The sequence spans 564 residues: MFS-type efflux transporter ffsH (564 aa).

The span at 1–18 (MSEAEKKASQDAQHKEPM) shows a compositional bias: basic and acidic residues. The disordered stretch occupies residues 1 to 37 (MSEAEKKASQDAQHKEPMADSETQLDSDSAPSSQAEK). Polar residues predominate over residues 21-35 (SETQLDSDSAPSSQA). 4 helical membrane passes run 43-63 (YPLS…ISAM), 98-118 (YVMI…GGAN), 131-151 (GIGA…LVPM), and 157-177 (FIGL…IIGG). Residue N182 is glycosylated (N-linked (GlcNAc...) asparagine). The next 9 membrane-spanning stretches (helical) occupy residues 187-207 (WVFY…VLFL), 226-246 (VVGN…LTYG), 254-274 (AANI…FIAW), 300-320 (FFIS…YPVY), 334-354 (VHLL…GGLV), 362-382 (PIHM…SVLT), 389-409 (AWAV…STTL), 427-447 (TWAY…AAIF), and 502-522 (VWLV…FEKE). The tract at residues 540–564 (GDAKGDVERGEGQNDSREGGQNENV) is disordered. Residue N553 is glycosylated (N-linked (GlcNAc...) asparagine).

It belongs to the major facilitator superfamily.

It localises to the cell membrane. In terms of biological role, MFS-type efflux transporter; part of the gene cluster that mediates the biosynthesis of the cytotoxic leucine-containing cytochalasans, including aspochalasin C, aspochalasin E, TMC-169, flavichalasine F, aspergillin PZ, aspochalasin M and flavichalasine G. FfsH might be involved in the excretion of cytochalasans. This Aspergillus flavipes protein is MFS-type efflux transporter ffsH.